The primary structure comprises 125 residues: Lymphocyte antigen 6 complex locus protein G6c (125 aa).

The first 18 residues, 1 to 18 (MKALMLLTLSVLLCWVSA), serve as a signal peptide directing secretion. Residues 20 to 111 (IRCHSCYKVP…PRPTPALGLV (92 aa)) enclose the UPAR/Ly6 domain. Intrachain disulfides connect Cys-22/Cys-47, Cys-25/Cys-33, and Cys-39/Cys-65. Asn-88 carries an N-linked (GlcNAc...) asparagine glycan. A disulfide bond links Cys-92 and Cys-97. The GPI-anchor amidated serine moiety is linked to residue Ser-99. Residues 100 to 125 (AGPRPTPALGLVFLTSLAGLGLWLLH) constitute a propeptide, removed in mature form.

As to quaternary structure, monomer. Post-translationally, N-glycosylated. Highly expressed at the leading edges of cells, on filopodia.

It localises to the cell membrane. In Homo sapiens (Human), this protein is Lymphocyte antigen 6 complex locus protein G6c (LY6G6C).